Reading from the N-terminus, the 429-residue chain is Asparagine--tRNA ligase (429 aa).

This sequence belongs to the class-II aminoacyl-tRNA synthetase family.

Its subcellular location is the cytoplasm. It catalyses the reaction tRNA(Asn) + L-asparagine + ATP = L-asparaginyl-tRNA(Asn) + AMP + diphosphate + H(+). The polypeptide is Asparagine--tRNA ligase (Thermoplasma acidophilum (strain ATCC 25905 / DSM 1728 / JCM 9062 / NBRC 15155 / AMRC-C165)).